The following is a 217-amino-acid chain: Probable nicotinate-nucleotide adenylyltransferase (217 aa).

The protein belongs to the NadD family.

It carries out the reaction nicotinate beta-D-ribonucleotide + ATP + H(+) = deamido-NAD(+) + diphosphate. The protein operates within cofactor biosynthesis; NAD(+) biosynthesis; deamido-NAD(+) from nicotinate D-ribonucleotide: step 1/1. Functionally, catalyzes the reversible adenylation of nicotinate mononucleotide (NaMN) to nicotinic acid adenine dinucleotide (NaAD). In Dechloromonas aromatica (strain RCB), this protein is Probable nicotinate-nucleotide adenylyltransferase.